Here is an 84-residue protein sequence, read N- to C-terminus: uncharacterized protein (84 aa).

A compositionally biased stretch (low complexity) spans Met-1 to Asn-14. Residues Met-1 to Glu-84 form a disordered region. The segment covering Ser-28–Phe-40 has biased composition (gly residues). 2 stretches are compositionally biased toward basic and acidic residues: residues Asp-53–Thr-65 and Lys-73–Glu-84.

This is an uncharacterized protein from Schizosaccharomyces pombe (strain 972 / ATCC 24843) (Fission yeast).